A 391-amino-acid chain; its full sequence is Uroporphyrinogen decarboxylase, chloroplastic (391 aa).

Substrate contacts are provided by residues 71–75 (RQAGR), Phe-90, Ser-120, Asp-121, Tyr-198, Ser-253, and His-368.

It belongs to the uroporphyrinogen decarboxylase family. Homodimer.

Its subcellular location is the plastid. The protein resides in the chloroplast. The catalysed reaction is uroporphyrinogen III + 4 H(+) = coproporphyrinogen III + 4 CO2. It functions in the pathway porphyrin-containing compound metabolism; protoporphyrin-IX biosynthesis; coproporphyrinogen-III from 5-aminolevulinate: step 4/4. Its function is as follows. Catalyzes the decarboxylation of four acetate groups of uroporphyrinogen-III to yield coproporphyrinogen-III. The sequence is that of Uroporphyrinogen decarboxylase, chloroplastic (DCUP) from Nicotiana tabacum (Common tobacco).